The primary structure comprises 624 residues: Acidic juvenile hormone-suppressible protein 1 (624 aa).

The first 18 residues, 1–18 (MARLVLCALALLVAGGLA), serve as a signal peptide directing secretion. 2 N-linked (GlcNAc...) asparagine glycosylation sites follow: asparagine 75 and asparagine 478.

This sequence belongs to the hemocyanin family.

Its subcellular location is the secreted. The protein localises to the extracellular space. This Trichoplusia ni (Cabbage looper) protein is Acidic juvenile hormone-suppressible protein 1 (AJSP-1).